The following is a 281-amino-acid chain: NADH-quinone oxidoreductase subunit B (281 aa).

[4Fe-4S] cluster is bound by residues C37, C38, C103, and C132. The interval 242 to 281 (DAKPLDESRAHGPGPTTADIADAADTADSDAAPGATHDTP) is disordered. Residues 257 to 281 (TTADIADAADTADSDAAPGATHDTP) are compositionally biased toward low complexity.

Belongs to the complex I 20 kDa subunit family. NDH-1 is composed of 14 different subunits. Subunits NuoB, C, D, E, F, and G constitute the peripheral sector of the complex. It depends on [4Fe-4S] cluster as a cofactor.

It is found in the cell membrane. The catalysed reaction is a quinone + NADH + 5 H(+)(in) = a quinol + NAD(+) + 4 H(+)(out). In terms of biological role, NDH-1 shuttles electrons from NADH, via FMN and iron-sulfur (Fe-S) centers, to quinones in the respiratory chain. The immediate electron acceptor for the enzyme in this species is believed to be a menaquinone. Couples the redox reaction to proton translocation (for every two electrons transferred, four hydrogen ions are translocated across the cytoplasmic membrane), and thus conserves the redox energy in a proton gradient. In Frankia alni (strain DSM 45986 / CECT 9034 / ACN14a), this protein is NADH-quinone oxidoreductase subunit B.